The primary structure comprises 40 residues: uncharacterized protein (40 aa).

This is an uncharacterized protein from Treponema pallidum (strain Nichols).